The primary structure comprises 969 residues: Isoleucine--tRNA ligase (969 aa).

Positions 68-78 (PYANGNLHMGH) match the 'HIGH' region motif. Glutamate 584 contributes to the L-isoleucyl-5'-AMP binding site. The 'KMSKS' region signature appears at 625 to 629 (KMSKS). Lysine 628 is an ATP binding site. The Zn(2+) site is built by cysteine 938, cysteine 941, cysteine 958, and cysteine 961.

Belongs to the class-I aminoacyl-tRNA synthetase family. IleS type 1 subfamily. As to quaternary structure, monomer. Zn(2+) is required as a cofactor.

The protein localises to the cytoplasm. The enzyme catalyses tRNA(Ile) + L-isoleucine + ATP = L-isoleucyl-tRNA(Ile) + AMP + diphosphate. Functionally, catalyzes the attachment of isoleucine to tRNA(Ile). As IleRS can inadvertently accommodate and process structurally similar amino acids such as valine, to avoid such errors it has two additional distinct tRNA(Ile)-dependent editing activities. One activity is designated as 'pretransfer' editing and involves the hydrolysis of activated Val-AMP. The other activity is designated 'posttransfer' editing and involves deacylation of mischarged Val-tRNA(Ile). In Prochlorococcus marinus (strain SARG / CCMP1375 / SS120), this protein is Isoleucine--tRNA ligase.